A 729-amino-acid chain; its full sequence is Fatty acid oxidation complex subunit alpha (729 aa).

Positions 1 to 189 (MLYQSETLQL…KVGLVDAVVA (189 aa)) are enoyl-CoA hydratase/isomerase. Position 296 (aspartate 296) interacts with substrate. Residues 311–729 (SAPKQAAVLG…LLDVSISQPA (419 aa)) form a 3-hydroxyacyl-CoA dehydrogenase region. NAD(+)-binding positions include methionine 324, aspartate 343, 400-402 (VVE), lysine 407, and serine 429. Histidine 450 acts as the For 3-hydroxyacyl-CoA dehydrogenase activity in catalysis. NAD(+) is bound at residue asparagine 453. 2 residues coordinate substrate: asparagine 500 and tyrosine 660.

In the N-terminal section; belongs to the enoyl-CoA hydratase/isomerase family. It in the C-terminal section; belongs to the 3-hydroxyacyl-CoA dehydrogenase family. As to quaternary structure, heterotetramer of two alpha chains (FadB) and two beta chains (FadA).

The enzyme catalyses a (3S)-3-hydroxyacyl-CoA + NAD(+) = a 3-oxoacyl-CoA + NADH + H(+). The catalysed reaction is a (3S)-3-hydroxyacyl-CoA = a (2E)-enoyl-CoA + H2O. It carries out the reaction a 4-saturated-(3S)-3-hydroxyacyl-CoA = a (3E)-enoyl-CoA + H2O. It catalyses the reaction (3S)-3-hydroxybutanoyl-CoA = (3R)-3-hydroxybutanoyl-CoA. The enzyme catalyses a (3Z)-enoyl-CoA = a 4-saturated (2E)-enoyl-CoA. The catalysed reaction is a (3E)-enoyl-CoA = a 4-saturated (2E)-enoyl-CoA. The protein operates within lipid metabolism; fatty acid beta-oxidation. Involved in the aerobic and anaerobic degradation of long-chain fatty acids via beta-oxidation cycle. Catalyzes the formation of 3-oxoacyl-CoA from enoyl-CoA via L-3-hydroxyacyl-CoA. It can also use D-3-hydroxyacyl-CoA and cis-3-enoyl-CoA as substrate. In Yersinia enterocolitica serotype O:8 / biotype 1B (strain NCTC 13174 / 8081), this protein is Fatty acid oxidation complex subunit alpha.